A 144-amino-acid chain; its full sequence is MASTRVLASRLASQMATKVARPAVRVPARAFTAGTKATPLQAVKRQQMSSIITATRQITQKRAYSSEIAQAMVEVSKNLGMGTAAIGLTGAGIGIGLVFAALLNGVARNPALRGQLFSYAILGFAFVEAIGLFDLMVALMAKFT.

Residues 1-63 (MASTRVLASR…ATRQITQKRA (63 aa)) constitute a mitochondrion transit peptide. 2 consecutive transmembrane segments (helical) span residues 83 to 103 (TAAIGLTGAGIGIGLVFAALL) and 120 to 140 (AILGFAFVEAIGLFDLMVALM).

This sequence belongs to the ATPase C chain family. In terms of assembly, F-type ATPases have 2 components, CF(1) - the catalytic core - and CF(0) - the membrane proton channel. CF(1) has five subunits: alpha(3), beta(3), gamma(1), delta(1), epsilon(1). CF(0) has three main subunits: a, b and c.

It is found in the mitochondrion membrane. Functionally, mitochondrial membrane ATP synthase (F(1)F(0) ATP synthase or Complex V) produces ATP from ADP in the presence of a proton gradient across the membrane which is generated by electron transport complexes of the respiratory chain. F-type ATPases consist of two structural domains, F(1) - containing the extramembraneous catalytic core and F(0) - containing the membrane proton channel, linked together by a central stalk and a peripheral stalk. During catalysis, ATP synthesis in the catalytic domain of F(1) is coupled via a rotary mechanism of the central stalk subunits to proton translocation. Part of the complex F(0) domain. A homomeric c-ring of probably 10 subunits is part of the complex rotary element. The chain is ATP synthase subunit 9, mitochondrial (ATP9) from Podospora anserina (Pleurage anserina).